We begin with the raw amino-acid sequence, 196 residues long: Protein LIGHT-DEPENDENT SHORT HYPOCOTYLS 6 (196 aa).

The span at 1-16 shows a compositional bias: basic and acidic residues; it reads MESADSGRSDPVKGDD. Disordered stretches follow at residues 1-36 and 149-196; these read MESADSGRSDPVKGDDPGPSFVSSPPATPSRYESQK and ARGI…AVPP. One can recognise an ALOG domain in the interval 31–158; the sequence is RYESQKRRDW…ARGIPYEKKK (128 aa). The Nuclear localization signal motif lies at 156 to 160; the sequence is KKKRK.

It belongs to the plant homeotic and developmental regulators ALOG protein family.

The protein resides in the nucleus. Its function is as follows. Probable transcription regulator that acts as a developmental regulator by promoting cell growth in response to light. The chain is Protein LIGHT-DEPENDENT SHORT HYPOCOTYLS 6 (LSH6) from Arabidopsis thaliana (Mouse-ear cress).